The sequence spans 290 residues: 4-hydroxy-tetrahydrodipicolinate synthase (290 aa).

Pyruvate is bound at residue Thr44. Catalysis depends on Tyr132, which acts as the Proton donor/acceptor. Lys160 (schiff-base intermediate with substrate) is an active-site residue. Residue Ile202 coordinates pyruvate.

The protein belongs to the DapA family. Homotetramer; dimer of dimers.

It localises to the cytoplasm. The enzyme catalyses L-aspartate 4-semialdehyde + pyruvate = (2S,4S)-4-hydroxy-2,3,4,5-tetrahydrodipicolinate + H2O + H(+). It participates in amino-acid biosynthesis; L-lysine biosynthesis via DAP pathway; (S)-tetrahydrodipicolinate from L-aspartate: step 3/4. Functionally, catalyzes the condensation of (S)-aspartate-beta-semialdehyde [(S)-ASA] and pyruvate to 4-hydroxy-tetrahydrodipicolinate (HTPA). This Legionella pneumophila (strain Corby) protein is 4-hydroxy-tetrahydrodipicolinate synthase.